The following is a 116-amino-acid chain: Large ribosomal subunit protein bL19 (116 aa).

This sequence belongs to the bacterial ribosomal protein bL19 family.

Functionally, this protein is located at the 30S-50S ribosomal subunit interface and may play a role in the structure and function of the aminoacyl-tRNA binding site. In Ectopseudomonas mendocina (strain ymp) (Pseudomonas mendocina), this protein is Large ribosomal subunit protein bL19.